The following is a 246-amino-acid chain: Ribonuclease 3 (246 aa).

The 126-residue stretch at 10–135 (LENFLTLNNI…FVAAIYLDLG (126 aa)) folds into the RNase III domain. Mg(2+) is bound at residue Glu-50. Residue Asp-54 is part of the active site. Asp-121 and Glu-124 together coordinate Mg(2+). Residue Glu-124 is part of the active site. The DRBM domain maps to 161-230 (DPKSSFQEYI…ATRALETLKA (70 aa)).

This sequence belongs to the ribonuclease III family. As to quaternary structure, homodimer. It depends on Mg(2+) as a cofactor.

It is found in the cytoplasm. It catalyses the reaction Endonucleolytic cleavage to 5'-phosphomonoester.. In terms of biological role, digests double-stranded RNA. Involved in the processing of primary rRNA transcript to yield the immediate precursors to the large and small rRNAs (23S and 16S). Processes some mRNAs, and tRNAs when they are encoded in the rRNA operon. Processes pre-crRNA and tracrRNA of type II CRISPR loci if present in the organism. The sequence is that of Ribonuclease 3 from Mycoplasma mobile (strain ATCC 43663 / 163K / NCTC 11711) (Mesomycoplasma mobile).